The chain runs to 517 residues: 2-isopropylmalate synthase (517 aa).

One can recognise a Pyruvate carboxyltransferase domain in the interval 5 to 267 (VIIFDTTLRD…HTNVRCQEIY (263 aa)). Mn(2+) contacts are provided by Asp-14, His-202, His-204, and Asn-238. Residues 392–517 (RLKCFHVDSS…QRKYIKKNNN (126 aa)) are regulatory domain.

Belongs to the alpha-IPM synthase/homocitrate synthase family. LeuA type 1 subfamily. In terms of assembly, homodimer. Mn(2+) serves as cofactor.

It localises to the cytoplasm. It catalyses the reaction 3-methyl-2-oxobutanoate + acetyl-CoA + H2O = (2S)-2-isopropylmalate + CoA + H(+). Its pathway is amino-acid biosynthesis; L-leucine biosynthesis; L-leucine from 3-methyl-2-oxobutanoate: step 1/4. In terms of biological role, catalyzes the condensation of the acetyl group of acetyl-CoA with 3-methyl-2-oxobutanoate (2-ketoisovalerate) to form 3-carboxy-3-hydroxy-4-methylpentanoate (2-isopropylmalate). The sequence is that of 2-isopropylmalate synthase from Blochmanniella pennsylvanica (strain BPEN).